A 278-amino-acid polypeptide reads, in one-letter code: DegV domain-containing protein YejH (278 aa).

Residues 3-277 enclose the DegV domain; the sequence is IKIVTDSSIT…PGAWAIMIDY (275 aa). Hexadecanoate is bound by residues Thr-60 and Ser-92.

In terms of biological role, may bind long-chain fatty acids, such as palmitate, and may play a role in lipid transport or fatty acid metabolism. The sequence is that of DegV domain-containing protein YejH (yejH) from Lactococcus lactis subsp. lactis (strain IL1403) (Streptococcus lactis).